The following is a 404-amino-acid chain: Cysteine desulfurase IscS (404 aa).

Residues 75-76, asparagine 155, glutamine 183, and 203-205 contribute to the pyridoxal 5'-phosphate site; these read AT and SGH. Position 206 is an N6-(pyridoxal phosphate)lysine (lysine 206). Threonine 243 is a pyridoxal 5'-phosphate binding site. Residue cysteine 328 is the Cysteine persulfide intermediate of the active site. [2Fe-2S] cluster is bound at residue cysteine 328.

Belongs to the class-V pyridoxal-phosphate-dependent aminotransferase family. NifS/IscS subfamily. Homodimer. Forms a heterotetramer with IscU, interacts with other sulfur acceptors. Pyridoxal 5'-phosphate serves as cofactor.

The protein resides in the cytoplasm. The enzyme catalyses (sulfur carrier)-H + L-cysteine = (sulfur carrier)-SH + L-alanine. It functions in the pathway cofactor biosynthesis; iron-sulfur cluster biosynthesis. In terms of biological role, master enzyme that delivers sulfur to a number of partners involved in Fe-S cluster assembly, tRNA modification or cofactor biosynthesis. Catalyzes the removal of elemental sulfur and selenium atoms from cysteine and selenocysteine to produce alanine. Functions as a sulfur delivery protein for Fe-S cluster synthesis onto IscU, an Fe-S scaffold assembly protein, as well as other S acceptor proteins. Also functions as a selenium delivery protein in the pathway for the biosynthesis of selenophosphate. The chain is Cysteine desulfurase IscS from Escherichia coli (strain K12 / DH10B).